The primary structure comprises 785 residues: Endonuclease MutS2 (785 aa).

Residue 335–342 (GPNTGGKT) coordinates ATP. Positions 710–785 (LDLRGERYED…GNGVTIVEFK (76 aa)) constitute a Smr domain.

This sequence belongs to the DNA mismatch repair MutS family. MutS2 subfamily. In terms of assembly, homodimer. Binds to stalled ribosomes, contacting rRNA.

Endonuclease that is involved in the suppression of homologous recombination and thus may have a key role in the control of bacterial genetic diversity. Functionally, acts as a ribosome collision sensor, splitting the ribosome into its 2 subunits. Detects stalled/collided 70S ribosomes which it binds and splits by an ATP-hydrolysis driven conformational change. Acts upstream of the ribosome quality control system (RQC), a ribosome-associated complex that mediates the extraction of incompletely synthesized nascent chains from stalled ribosomes and their subsequent degradation. Probably generates substrates for RQC. The polypeptide is Endonuclease MutS2 (Listeria monocytogenes serotype 4b (strain CLIP80459)).